A 163-amino-acid polypeptide reads, in one-letter code: Cyanate hydratase (163 aa).

Residues Arg-103, Glu-106, and Ser-129 contribute to the active site.

This sequence belongs to the cyanase family.

The enzyme catalyses cyanate + hydrogencarbonate + 3 H(+) = NH4(+) + 2 CO2. In terms of biological role, catalyzes the reaction of cyanate with bicarbonate to produce ammonia and carbon dioxide. The chain is Cyanate hydratase from Ajellomyces capsulatus (strain H143) (Darling's disease fungus).